The primary structure comprises 78 residues: DNA-directed RNA polymerase subunit omega (78 aa).

It belongs to the RNA polymerase subunit omega family. In terms of assembly, in cyanobacteria the RNAP catalytic core is composed of 2 alpha, 1 beta, 1 beta', 1 gamma and 1 omega subunit. When a sigma factor is associated with the core the holoenzyme is formed, which can initiate transcription.

The catalysed reaction is RNA(n) + a ribonucleoside 5'-triphosphate = RNA(n+1) + diphosphate. In terms of biological role, promotes RNA polymerase assembly. Latches the N- and C-terminal regions of the beta' subunit thereby facilitating its interaction with the beta and alpha subunits. The protein is DNA-directed RNA polymerase subunit omega of Prochlorococcus marinus (strain MIT 9301).